The sequence spans 499 residues: Anaerobic magnesium-protoporphyrin IX monomethyl ester cyclase (499 aa).

The B12-binding domain occupies 9 to 145 (PHPAIGSRIP…AALENHNDLN (137 aa)). The Radical SAM core domain occupies 188-420 (YGGKQAVVIQ…PPWRIFLWVK (233 aa)). Positions 202, 206, and 209 each coordinate [4Fe-4S] cluster.

It belongs to the BchE family. Requires [4Fe-4S] cluster as cofactor. It depends on adenosylcob(III)alamin as a cofactor.

It carries out the reaction Mg-protoporphyrin IX 13-monomethyl ester + 3 S-adenosyl-L-methionine + H2O = 3,8-divinyl protochlorophyllide a + 3 5'-deoxyadenosine + 3 L-methionine + 4 H(+). Its pathway is porphyrin-containing compound metabolism; bacteriochlorophyll biosynthesis (light-independent). In terms of biological role, involved in the tetrapyrrole biosynthetic pathways leading to chlorophyll and bacteriochlorophyll (BChl). Catalyzes the anaerobic formation of the isocyclic ring (E-ring) in Mg-protoporphyrin monomethyl ester (MPE) to yield protochlorophyllide a (PChlide a) via a six-electron oxidation and the formation of an oxo group at position C13 using oxygen from a water molecule. The sequence is that of Anaerobic magnesium-protoporphyrin IX monomethyl ester cyclase from Synechocystis sp. (strain ATCC 27184 / PCC 6803 / Kazusa).